The following is a 445-amino-acid chain: Phosphoglucosamine mutase (445 aa).

The Phosphoserine intermediate role is filled by Ser-102. Ser-102, Asp-240, Asp-242, and Asp-244 together coordinate Mg(2+). At Ser-102 the chain carries Phosphoserine.

The protein belongs to the phosphohexose mutase family. Requires Mg(2+) as cofactor. Post-translationally, activated by phosphorylation.

It carries out the reaction alpha-D-glucosamine 1-phosphate = D-glucosamine 6-phosphate. Its function is as follows. Catalyzes the conversion of glucosamine-6-phosphate to glucosamine-1-phosphate. This Mycobacterium ulcerans (strain Agy99) protein is Phosphoglucosamine mutase.